Consider the following 380-residue polypeptide: MGGNTIGKMFSVTTWGESHGKAIGAVIDGCPAGLPLSEEDLLVELSLRRPGRRFTTPRREPDVPEILSGVFNGKTTGMPISIIIRNRDVISSYYEKIKETPRPGHADLAYIKKYGYEHWDYRGGGRASGRETAARVAAGAVAKKLLGCLGVVVSGYVVELGGVEFPSAEDAEESLRSRLSPFRVLCCEEKAEEVLKEALERRDSVGGVVEAVAWNAPAGLGEPVFDKLKADLAKAMMSIPASVGFEVGWGFKLARLRGSEARDKIVSSAGEATVEGDKAGGMLGGISVGAPIRIRVAFKPTSSIMIPEKTVNIHTLEETEVEVPGRHDPAIVLRAVSVVESMFAIVLVDHAIRAGLLNPVRVEWGPHCQRVWELYADRVP.

NADP(+) contacts are provided by Arg-48 and Arg-53. FMN contacts are provided by residues 126–128 (RAS), Gly-284, 299–303 (KPTSS), and Arg-326.

It belongs to the chorismate synthase family. It depends on FMNH2 as a cofactor.

It catalyses the reaction 5-O-(1-carboxyvinyl)-3-phosphoshikimate = chorismate + phosphate. It participates in metabolic intermediate biosynthesis; chorismate biosynthesis; chorismate from D-erythrose 4-phosphate and phosphoenolpyruvate: step 7/7. Functionally, catalyzes the anti-1,4-elimination of the C-3 phosphate and the C-6 proR hydrogen from 5-enolpyruvylshikimate-3-phosphate (EPSP) to yield chorismate, which is the branch point compound that serves as the starting substrate for the three terminal pathways of aromatic amino acid biosynthesis. This reaction introduces a second double bond into the aromatic ring system. This Ignicoccus hospitalis (strain KIN4/I / DSM 18386 / JCM 14125) protein is Chorismate synthase.